The following is a 469-amino-acid chain: UDP-N-acetylmuramoylalanine--D-glutamate ligase (469 aa).

Residue 123-129 (GTNGKST) participates in ATP binding.

The protein belongs to the MurCDEF family.

The protein localises to the cytoplasm. It catalyses the reaction UDP-N-acetyl-alpha-D-muramoyl-L-alanine + D-glutamate + ATP = UDP-N-acetyl-alpha-D-muramoyl-L-alanyl-D-glutamate + ADP + phosphate + H(+). Its pathway is cell wall biogenesis; peptidoglycan biosynthesis. Functionally, cell wall formation. Catalyzes the addition of glutamate to the nucleotide precursor UDP-N-acetylmuramoyl-L-alanine (UMA). In Phenylobacterium zucineum (strain HLK1), this protein is UDP-N-acetylmuramoylalanine--D-glutamate ligase.